The chain runs to 201 residues: Cerebellin-4 (201 aa).

The N-terminal stretch at M1–A27 is a signal peptide. 2 N-linked (GlcNAc...) asparagine glycosylation sites follow: N29 and N88. Residues A66–L201 enclose the C1q domain.

Homohexamer; disulfide-linked homotrimers. The trimers are assembled via the globular C1q domains. The trimers associate via N-terminal cysteine residues to form disulfide-linked hexamers. May form oligomers with CBLN1, CBLN2 and CBLN3 prior to secretion. Strongly interacts with DCC in a NTN1-displaceable fashion. Weakly binds to NRXN1 and NRXN2 long and short isoforms produced by alternative promoter usage. Interaction with NRXN3 short isoform is hardly detectable; no interaction at all with NRXN3 long isoform. Sialoglycoprotein.

The protein resides in the secreted. It localises to the synapse. In terms of biological role, acts as a synaptic organizer in specific subsets of neurons in the brain. Essential for the formation and maintenance of inhibitory GABAergic synapses. Promotes the development of dendrite-targeting inhibitory GABAergic synapses made by somatostatin-positive interneurons. May contribute to the function of ventral medial habenula region of the brain implicated in the regulation of anxiety-related behaviors. May play a role in CBLN3 export from the endoplasmic reticulum and secretion. The sequence is that of Cerebellin-4 (CBLN4) from Homo sapiens (Human).